Consider the following 94-residue polypeptide: Protein translocase subunit SecE (94 aa).

The disordered stretch occupies residues 1 to 32 (MTDAVGSIDMPDAQDEAPDSKKSRKGGKRGKK). Basic residues predominate over residues 22–32 (KSRKGGKRGKK). Residues 65–85 (TVVIIFVVIMIGLVTLIDYGF) form a helical membrane-spanning segment.

This sequence belongs to the SecE/SEC61-gamma family. As to quaternary structure, component of the Sec protein translocase complex. Heterotrimer consisting of SecY, SecE and SecG subunits. The heterotrimers can form oligomers, although 1 heterotrimer is thought to be able to translocate proteins. Interacts with the ribosome. Interacts with SecDF, and other proteins may be involved. Interacts with SecA.

It localises to the cell membrane. Its function is as follows. Essential subunit of the Sec protein translocation channel SecYEG. Clamps together the 2 halves of SecY. May contact the channel plug during translocation. In Streptomyces lividans, this protein is Protein translocase subunit SecE.